The chain runs to 291 residues: Lipoyl synthase (291 aa).

Positions 35, 40, 46, 61, 65, 68, and 273 each coordinate [4Fe-4S] cluster. The Radical SAM core domain occupies 47-262 (FGKRQATFLI…KEKALAMGFE (216 aa)).

The protein belongs to the radical SAM superfamily. Lipoyl synthase family. [4Fe-4S] cluster is required as a cofactor.

The protein localises to the cytoplasm. The catalysed reaction is [[Fe-S] cluster scaffold protein carrying a second [4Fe-4S](2+) cluster] + N(6)-octanoyl-L-lysyl-[protein] + 2 oxidized [2Fe-2S]-[ferredoxin] + 2 S-adenosyl-L-methionine + 4 H(+) = [[Fe-S] cluster scaffold protein] + N(6)-[(R)-dihydrolipoyl]-L-lysyl-[protein] + 4 Fe(3+) + 2 hydrogen sulfide + 2 5'-deoxyadenosine + 2 L-methionine + 2 reduced [2Fe-2S]-[ferredoxin]. The protein operates within protein modification; protein lipoylation via endogenous pathway; protein N(6)-(lipoyl)lysine from octanoyl-[acyl-carrier-protein]: step 2/2. In terms of biological role, catalyzes the radical-mediated insertion of two sulfur atoms into the C-6 and C-8 positions of the octanoyl moiety bound to the lipoyl domains of lipoate-dependent enzymes, thereby converting the octanoylated domains into lipoylated derivatives. This chain is Lipoyl synthase, found in Geobacter sp. (strain M21).